Consider the following 75-residue polypeptide: Sec-independent protein translocase protein TatA (75 aa).

Residues methionine 1–glycine 21 traverse the membrane as a helical segment. Positions lysine 40 to arginine 75 are disordered.

The protein belongs to the TatA/E family. The Tat system comprises two distinct complexes: a TatABC complex, containing multiple copies of TatA, TatB and TatC subunits, and a separate TatA complex, containing only TatA subunits. Substrates initially bind to the TatABC complex, which probably triggers association of the separate TatA complex to form the active translocon.

The protein resides in the cell inner membrane. Part of the twin-arginine translocation (Tat) system that transports large folded proteins containing a characteristic twin-arginine motif in their signal peptide across membranes. TatA could form the protein-conducting channel of the Tat system. This chain is Sec-independent protein translocase protein TatA, found in Stenotrophomonas maltophilia (strain R551-3).